The chain runs to 146 residues: Large ribosomal subunit protein uL15 (146 aa).

A disordered region spans residues 1–54 (MTIKLHDLRPAPGSKTPRTRVGRGEGSKGKTAGRGTKGTKARKQVPTTFEGGQM).

It belongs to the universal ribosomal protein uL15 family. As to quaternary structure, part of the 50S ribosomal subunit.

Functionally, binds to the 23S rRNA. This Mycobacterium marinum (strain ATCC BAA-535 / M) protein is Large ribosomal subunit protein uL15.